Consider the following 67-residue polypeptide: Beta-defensin 14 (67 aa).

The first 22 residues, 1 to 22 (MRLHYLLFVFLILFLVPAPGDA), serve as a signal peptide directing secretion. Intrachain disulfides connect cysteine 33-cysteine 62, cysteine 40-cysteine 55, and cysteine 45-cysteine 63.

Belongs to the beta-defensin family.

The protein localises to the secreted. Functionally, has antibacterial activity. This chain is Beta-defensin 14 (Defb14), found in Mus musculus (Mouse).